A 123-amino-acid chain; its full sequence is uncharacterized protein (123 aa).

A helical membrane pass occupies residues 1-21 (MHIIAKSILLMAVSFLVIIFT).

The protein localises to the membrane. This is an uncharacterized protein from Methanocaldococcus jannaschii (strain ATCC 43067 / DSM 2661 / JAL-1 / JCM 10045 / NBRC 100440) (Methanococcus jannaschii).